The chain runs to 537 residues: Protoporphyrinogen oxidase 1, chloroplastic (537 aa).

A chloroplast-targeting transit peptide spans 1–34 (MELSLLRPTTQSLLPSFSKPNLRLNVYKPLRLRC). Serine 35 bears the N-acetylserine mark. FAD is bound by residues 63-68 (GGGISG), 90-91 (EA), and 112-115 (GPNS). The span at 256–268 (RKNAPKAERDPRL) shows a compositional bias: basic and acidic residues. The tract at residues 256–275 (RKNAPKAERDPRLPKPQGQT) is disordered. Position 511 to 513 (511 to 513 (VAL)) interacts with FAD.

Belongs to the protoporphyrinogen/coproporphyrinogen oxidase family. Protoporphyrinogen oxidase subfamily. It depends on FAD as a cofactor. Expressed at high levels in the leaves and at low levels in the roots and floral buds.

The protein localises to the plastid. It localises to the chloroplast. The catalysed reaction is protoporphyrinogen IX + 3 O2 = protoporphyrin IX + 3 H2O2. Its pathway is porphyrin-containing compound metabolism; protoporphyrin-IX biosynthesis; protoporphyrin-IX from protoporphyrinogen-IX: step 1/1. It functions in the pathway porphyrin-containing compound metabolism; chlorophyll biosynthesis. With respect to regulation, inhibited by acifluorfen. Catalyzes the 6-electron oxidation of protoporphyrinogen-IX to form protoporphyrin-IX. The polypeptide is Protoporphyrinogen oxidase 1, chloroplastic (PPOX1) (Arabidopsis thaliana (Mouse-ear cress)).